We begin with the raw amino-acid sequence, 205 residues long: Imidazole glycerol phosphate synthase subunit HisH (205 aa).

Residues 3–205 enclose the Glutamine amidotransferase type-1 domain; that stretch reads KIGLIDYGMG…LLRRWLSNIQ (203 aa). Cys-81 functions as the Nucleophile in the catalytic mechanism. Active-site residues include His-185 and Glu-187.

In terms of assembly, heterodimer of HisH and HisF.

It is found in the cytoplasm. It carries out the reaction 5-[(5-phospho-1-deoxy-D-ribulos-1-ylimino)methylamino]-1-(5-phospho-beta-D-ribosyl)imidazole-4-carboxamide + L-glutamine = D-erythro-1-(imidazol-4-yl)glycerol 3-phosphate + 5-amino-1-(5-phospho-beta-D-ribosyl)imidazole-4-carboxamide + L-glutamate + H(+). The enzyme catalyses L-glutamine + H2O = L-glutamate + NH4(+). It functions in the pathway amino-acid biosynthesis; L-histidine biosynthesis; L-histidine from 5-phospho-alpha-D-ribose 1-diphosphate: step 5/9. Functionally, IGPS catalyzes the conversion of PRFAR and glutamine to IGP, AICAR and glutamate. The HisH subunit catalyzes the hydrolysis of glutamine to glutamate and ammonia as part of the synthesis of IGP and AICAR. The resulting ammonia molecule is channeled to the active site of HisF. This is Imidazole glycerol phosphate synthase subunit HisH from Prochlorococcus marinus (strain MIT 9312).